Here is a 257-residue protein sequence, read N- to C-terminus: UPF0246 protein swp_3736 (257 aa).

This sequence belongs to the UPF0246 family.

The sequence is that of UPF0246 protein swp_3736 from Shewanella piezotolerans (strain WP3 / JCM 13877).